A 229-amino-acid polypeptide reads, in one-letter code: Prolactin (229 aa).

An N-terminal signal peptide occupies residues 1-30 (MDSKGSSQKGSRLLLLLVVSNLLLCQGVVS). A disulfide bridge connects residues C34 and C41. Phosphoserine is present on residues S56, S64, and S120. 2 disulfide bridges follow: C88–C204 and C221–C229.

Belongs to the somatotropin/prolactin family. As to quaternary structure, interacts with PRLR.

Its subcellular location is the secreted. Prolactin acts primarily on the mammary gland by promoting lactation. The sequence is that of Prolactin (PRL) from Bos taurus (Bovine).